The sequence spans 407 residues: Putative glycosyltransferase YtcC (407 aa).

The protein belongs to the glycosyltransferase group 1 family. Glycosyltransferase 4 subfamily.

This chain is Putative glycosyltransferase YtcC (ytcC), found in Bacillus subtilis (strain 168).